Reading from the N-terminus, the 57-residue chain is Large ribosomal subunit protein bL32 (57 aa).

Residues 1 to 20 (MAVQQRRVSKSRKGMRRSHD) are disordered. Basic residues predominate over residues 7–19 (RVSKSRKGMRRSH).

This sequence belongs to the bacterial ribosomal protein bL32 family.

The sequence is that of Large ribosomal subunit protein bL32 from Ureaplasma urealyticum serovar 10 (strain ATCC 33699 / Western).